Here is a 310-residue protein sequence, read N- to C-terminus: Haloalkane dehalogenase (310 aa).

Residues 49-295 (VFLCLHGEPT…DAGHFVQEFG (247 aa)) enclose the AB hydrolase-1 domain. Asp124 serves as the catalytic Nucleophile. The chloride site is built by Trp125 and Trp175. Catalysis depends on Asp260, which acts as the Proton donor. His289 serves as the catalytic Proton acceptor.

It belongs to the haloalkane dehalogenase family. Type 1 subfamily. In terms of assembly, monomer.

The enzyme catalyses 1-haloalkane + H2O = a halide anion + a primary alcohol + H(+). It catalyses the reaction 1,2-dichloroethane + H2O = 2-chloroethanol + chloride + H(+). It functions in the pathway xenobiotic degradation; 1,2-dichloroethane degradation; glycolate from 1,2-dichloroethane: step 1/4. Its activity is regulated as follows. Inhibited by thiol reagents such as p-chloromercuribenzoate and iodoacetamide. Catalyzes hydrolytic cleavage of carbon-halogen bonds in halogenated aliphatic compounds, leading to the formation of the corresponding primary alcohols, halide ions and protons. Has a broad substrate specificity, which includes terminally mono- and di- chlorinated and brominated alkanes (up to C4 only). The highest activity was found with 1,2-dichloroethane, 1,3-dichloropropane, and 1,2-dibromoethane. The chain is Haloalkane dehalogenase (dhlA) from Xanthobacter autotrophicus.